The sequence spans 234 residues: uncharacterized protein (234 aa).

The next 4 membrane-spanning stretches (helical) occupy residues 28 to 48 (IVII…SIIS), 67 to 87 (FQIF…FDPI), 123 to 143 (GGVD…SGTI), and 154 to 174 (LYCI…GLLY).

The protein belongs to the complex I subunit 2 family.

Its subcellular location is the mitochondrion membrane. This is an uncharacterized protein from Neurospora crassa (strain ATCC 24698 / 74-OR23-1A / CBS 708.71 / DSM 1257 / FGSC 987).